We begin with the raw amino-acid sequence, 329 residues long: Acetyl-coenzyme A carboxylase carboxyl transferase subunit alpha (329 aa).

One can recognise a CoA carboxyltransferase C-terminal domain in the interval 40-294 (QLETLAARRR…KNALEKHLSE (255 aa)).

Belongs to the AccA family. Acetyl-CoA carboxylase is a heterohexamer composed of biotin carboxyl carrier protein (AccB), biotin carboxylase (AccC) and two subunits each of ACCase subunit alpha (AccA) and ACCase subunit beta (AccD).

Its subcellular location is the cytoplasm. It catalyses the reaction N(6)-carboxybiotinyl-L-lysyl-[protein] + acetyl-CoA = N(6)-biotinyl-L-lysyl-[protein] + malonyl-CoA. The protein operates within lipid metabolism; malonyl-CoA biosynthesis; malonyl-CoA from acetyl-CoA: step 1/1. Its function is as follows. Component of the acetyl coenzyme A carboxylase (ACC) complex. First, biotin carboxylase catalyzes the carboxylation of biotin on its carrier protein (BCCP) and then the CO(2) group is transferred by the carboxyltransferase to acetyl-CoA to form malonyl-CoA. This chain is Acetyl-coenzyme A carboxylase carboxyl transferase subunit alpha, found in Prochlorococcus marinus (strain NATL1A).